Consider the following 843-residue polypeptide: Protein P (843 aa).

Residues M1–Q177 are terminal protein domain (TP). A spacer region spans residues D178–I346. 2 disordered regions span residues K220–A269 and T291–S316. Residues E347 to Q690 are polymerase/reverse transcriptase domain (RT). The Reverse transcriptase domain occupies E357–I600. Residues D429, D551, and D552 each coordinate Mg(2+).

The protein belongs to the hepadnaviridae P protein family.

It catalyses the reaction DNA(n) + a 2'-deoxyribonucleoside 5'-triphosphate = DNA(n+1) + diphosphate. The catalysed reaction is Endonucleolytic cleavage to 5'-phosphomonoester.. Activated by host HSP70 and HSP40 in vitro to be able to bind the epsilon loop of the pgRNA. Because deletion of the RNase H region renders the protein partly chaperone-independent, the chaperones may be needed indirectly to relieve occlusion of the RNA-binding site by this domain. Inhibited by several reverse-transcriptase inhibitors: Lamivudine, Adefovir and Entecavir. Multifunctional enzyme that converts the viral RNA genome into dsDNA in viral cytoplasmic capsids. This enzyme displays a DNA polymerase activity that can copy either DNA or RNA templates, and a ribonuclease H (RNase H) activity that cleaves the RNA strand of RNA-DNA heteroduplexes in a partially processive 3'- to 5'-endonucleasic mode. Neo-synthesized pregenomic RNA (pgRNA) are encapsidated together with the P protein, and reverse-transcribed inside the nucleocapsid. Initiation of reverse-transcription occurs first by binding the epsilon loop on the pgRNA genome, and is initiated by protein priming, thereby the 5'-end of (-)DNA is covalently linked to P protein. Partial (+)DNA is synthesized from the (-)DNA template and generates the relaxed circular DNA (RC-DNA) genome. After budding and infection, the RC-DNA migrates in the nucleus, and is converted into a plasmid-like covalently closed circular DNA (cccDNA). The activity of P protein does not seem to be necessary for cccDNA generation, and is presumably released from (+)DNA by host nuclear DNA repair machinery. This is Protein P from Homo sapiens (Human).